We begin with the raw amino-acid sequence, 287 residues long: Shikimate kinase 3, chloroplastic (287 aa).

The N-terminal 57 residues, 1 to 57, are a transit peptide targeting the chloroplast; that stretch reads MDAGVGLRAKPGAWAGLGNPRRSSTARVPVRFAVEKFAQPLVLGSDRRSCGAKLKVS. 98 to 105 is a binding site for ATP; that stretch reads GMMGSGKT. T105 is a Mg(2+) binding site. D123, R148, and G170 together coordinate substrate. R209 is an ATP binding site.

It belongs to the shikimate kinase family. It depends on Mg(2+) as a cofactor. In terms of tissue distribution, expressed in panicles.

The protein resides in the plastid. Its subcellular location is the chloroplast. It catalyses the reaction shikimate + ATP = 3-phosphoshikimate + ADP + H(+). The protein operates within metabolic intermediate biosynthesis; chorismate biosynthesis; chorismate from D-erythrose 4-phosphate and phosphoenolpyruvate: step 5/7. In terms of biological role, catalyzes the specific phosphorylation of the 3-hydroxyl group of shikimic acid using ATP as a cosubstrate. This Oryza sativa subsp. japonica (Rice) protein is Shikimate kinase 3, chloroplastic (SK3).